A 103-amino-acid polypeptide reads, in one-letter code: RNA-binding protein Hfq (103 aa).

Residues 9 to 68 (DPFLNALRRERVPVSIYLVNGIKLQGQIESFDQFVILLKNTVSQMVYKHAISTVVPSRPV) form the Sm domain. The tract at residues 63-103 (VPSRPVSHHSNNAGGGTGSNFHHGSNAQGSSAPAQDSDETE) is disordered. Polar residues predominate over residues 81-96 (SNFHHGSNAQGSSAPA).

The protein belongs to the Hfq family. As to quaternary structure, homohexamer.

In terms of biological role, RNA chaperone that binds small regulatory RNA (sRNAs) and mRNAs to facilitate mRNA translational regulation in response to envelope stress, environmental stress and changes in metabolite concentrations. Also binds with high specificity to tRNAs. The polypeptide is RNA-binding protein Hfq (Enterobacter sp. (strain 638)).